An 812-amino-acid chain; its full sequence is Probable inorganic carbon transporter subunit DabA (812 aa).

The Zn(2+) site is built by C339, D341, H501, and C516.

The protein belongs to the inorganic carbon transporter (TC 9.A.2) DabA family. In terms of assembly, forms a complex with DabB. The cofactor is Zn(2+).

It localises to the cell inner membrane. Its function is as follows. Part of an energy-coupled inorganic carbon pump. This is Probable inorganic carbon transporter subunit DabA from Xanthomonas axonopodis pv. citri (strain 306).